The chain runs to 435 residues: Serine--tRNA ligase (435 aa).

234-236 is an L-serine binding site; the sequence is TAE. ATP is bound at residue 265 to 267; it reads RRE. Glu-288 lines the L-serine pocket. 352 to 355 serves as a coordination point for ATP; that stretch reads EISS. Ser-388 is an L-serine binding site.

Belongs to the class-II aminoacyl-tRNA synthetase family. Type-1 seryl-tRNA synthetase subfamily. In terms of assembly, homodimer. The tRNA molecule binds across the dimer.

Its subcellular location is the cytoplasm. It carries out the reaction tRNA(Ser) + L-serine + ATP = L-seryl-tRNA(Ser) + AMP + diphosphate + H(+). The enzyme catalyses tRNA(Sec) + L-serine + ATP = L-seryl-tRNA(Sec) + AMP + diphosphate + H(+). The protein operates within aminoacyl-tRNA biosynthesis; selenocysteinyl-tRNA(Sec) biosynthesis; L-seryl-tRNA(Sec) from L-serine and tRNA(Sec): step 1/1. Catalyzes the attachment of serine to tRNA(Ser). Is also able to aminoacylate tRNA(Sec) with serine, to form the misacylated tRNA L-seryl-tRNA(Sec), which will be further converted into selenocysteinyl-tRNA(Sec). This chain is Serine--tRNA ligase, found in Synechococcus sp. (strain JA-3-3Ab) (Cyanobacteria bacterium Yellowstone A-Prime).